The sequence spans 175 residues: Peptide deformylase (175 aa).

Residues C96 and H138 each coordinate Fe cation. E139 is an active-site residue. A Fe cation-binding site is contributed by H142.

It belongs to the polypeptide deformylase family. Fe(2+) is required as a cofactor.

It carries out the reaction N-terminal N-formyl-L-methionyl-[peptide] + H2O = N-terminal L-methionyl-[peptide] + formate. In terms of biological role, removes the formyl group from the N-terminal Met of newly synthesized proteins. Requires at least a dipeptide for an efficient rate of reaction. N-terminal L-methionine is a prerequisite for activity but the enzyme has broad specificity at other positions. This chain is Peptide deformylase, found in Rhodopseudomonas palustris (strain ATCC BAA-98 / CGA009).